A 508-amino-acid chain; its full sequence is Photosystem II CP47 reaction center protein (508 aa).

The next 6 membrane-spanning stretches (helical) occupy residues 21-36, 101-115, 140-156, 203-218, 237-252, and 457-472; these read SVHIMHTALVAGWAGS, IVFSGLCFLAAIWHW, GIHLFLSGVACFGFGAF, IAAGTLGILAGLFHLS, VLSSSIAAVFFAAFVV, and SFALLFFFGHIWHGAR.

The protein belongs to the PsbB/PsbC family. PsbB subfamily. PSII is composed of 1 copy each of membrane proteins PsbA, PsbB, PsbC, PsbD, PsbE, PsbF, PsbH, PsbI, PsbJ, PsbK, PsbL, PsbM, PsbT, PsbX, PsbY, PsbZ, Psb30/Ycf12, at least 3 peripheral proteins of the oxygen-evolving complex and a large number of cofactors. It forms dimeric complexes. It depends on Binds multiple chlorophylls. PSII binds additional chlorophylls, carotenoids and specific lipids. as a cofactor.

Its subcellular location is the plastid. It is found in the chloroplast thylakoid membrane. Functionally, one of the components of the core complex of photosystem II (PSII). It binds chlorophyll and helps catalyze the primary light-induced photochemical processes of PSII. PSII is a light-driven water:plastoquinone oxidoreductase, using light energy to abstract electrons from H(2)O, generating O(2) and a proton gradient subsequently used for ATP formation. This chain is Photosystem II CP47 reaction center protein, found in Morus indica (Mulberry).